We begin with the raw amino-acid sequence, 281 residues long: NADPH-dependent 7-cyano-7-deazaguanine reductase (281 aa).

Residue 81–83 (IES) participates in substrate binding. 83–84 (SK) contributes to the NADPH binding site. The active-site Thioimide intermediate is C188. D195 serves as the catalytic Proton donor. 227–228 (HE) is a substrate binding site. Position 256-257 (256-257 (RG)) interacts with NADPH.

The protein belongs to the GTP cyclohydrolase I family. QueF type 2 subfamily. In terms of assembly, homodimer.

Its subcellular location is the cytoplasm. The catalysed reaction is 7-aminomethyl-7-carbaguanine + 2 NADP(+) = 7-cyano-7-deazaguanine + 2 NADPH + 3 H(+). Its pathway is tRNA modification; tRNA-queuosine biosynthesis. Functionally, catalyzes the NADPH-dependent reduction of 7-cyano-7-deazaguanine (preQ0) to 7-aminomethyl-7-deazaguanine (preQ1). The sequence is that of NADPH-dependent 7-cyano-7-deazaguanine reductase from Polaromonas naphthalenivorans (strain CJ2).